Reading from the N-terminus, the 161-residue chain is Nucleotide-binding protein RC1_3464 (161 aa).

The protein belongs to the YajQ family.

Functionally, nucleotide-binding protein. The polypeptide is Nucleotide-binding protein RC1_3464 (Rhodospirillum centenum (strain ATCC 51521 / SW)).